A 1357-amino-acid chain; its full sequence is DNA-directed RNA polymerase subunit beta (1357 aa).

It belongs to the RNA polymerase beta chain family. In terms of assembly, the RNAP catalytic core consists of 2 alpha, 1 beta, 1 beta' and 1 omega subunit. When a sigma factor is associated with the core the holoenzyme is formed, which can initiate transcription.

The enzyme catalyses RNA(n) + a ribonucleoside 5'-triphosphate = RNA(n+1) + diphosphate. DNA-dependent RNA polymerase catalyzes the transcription of DNA into RNA using the four ribonucleoside triphosphates as substrates. The protein is DNA-directed RNA polymerase subunit beta of Hahella chejuensis (strain KCTC 2396).